Reading from the N-terminus, the 227-residue chain is MKRNVVLQLTGVERHYGQGGTLLSILKGADFSISKGEIVALVAPSGTGKSTLLHVAGLLEHPDGGEVNINGHACDGLSDEKRTAIRRSQIGFVYQFHHLLPEFSALENIMMPQLIAGLSWKEAGERAGQLLDYMRIGHRGSHRPGELSGGEQQRVAIARAVANAPTLLLADEPTGNLDPETASYVFDALEALVRQSGLAALIATHNHELARRMDRRVTISDGKIVDF.

The region spanning 7–227 is the ABC transporter domain; it reads LQLTGVERHY…TISDGKIVDF (221 aa). ATP is bound at residue 43–50; it reads APSGTGKS.

This sequence belongs to the ABC transporter superfamily. Lipoprotein translocase (TC 3.A.1.125) family. As to quaternary structure, the complex is composed of two ATP-binding proteins (LolD) and two transmembrane proteins (LolC and LolE).

The protein resides in the cell inner membrane. Functionally, part of the ABC transporter complex LolCDE involved in the translocation of mature outer membrane-directed lipoproteins, from the inner membrane to the periplasmic chaperone, LolA. Responsible for the formation of the LolA-lipoprotein complex in an ATP-dependent manner. This is Lipoprotein-releasing system ATP-binding protein LolD from Rhizobium johnstonii (strain DSM 114642 / LMG 32736 / 3841) (Rhizobium leguminosarum bv. viciae).